We begin with the raw amino-acid sequence, 458 residues long: tRNA modification GTPase MnmE (458 aa).

3 residues coordinate (6S)-5-formyl-5,6,7,8-tetrahydrofolate: arginine 22, glutamate 84, and arginine 123. Positions 220-379 (GIATAIIGRP…LETAIADLFF (160 aa)) constitute a TrmE-type G domain. K(+) is bound at residue asparagine 230. GTP is bound by residues 230 to 235 (NVGKSS), 249 to 255 (TDIAGTT), and 274 to 277 (DTAG). Serine 234 serves as a coordination point for Mg(2+). Positions 249, 251, and 254 each coordinate K(+). Threonine 255 lines the Mg(2+) pocket. Lysine 458 lines the (6S)-5-formyl-5,6,7,8-tetrahydrofolate pocket.

This sequence belongs to the TRAFAC class TrmE-Era-EngA-EngB-Septin-like GTPase superfamily. TrmE GTPase family. In terms of assembly, homodimer. Heterotetramer of two MnmE and two MnmG subunits. K(+) serves as cofactor.

The protein localises to the cytoplasm. In terms of biological role, exhibits a very high intrinsic GTPase hydrolysis rate. Involved in the addition of a carboxymethylaminomethyl (cmnm) group at the wobble position (U34) of certain tRNAs, forming tRNA-cmnm(5)s(2)U34. This chain is tRNA modification GTPase MnmE, found in Bacillus cereus (strain ATCC 10987 / NRS 248).